Here is a 238-residue protein sequence, read N- to C-terminus: Zinc finger protein ZAT6 (238 aa).

The segment covering 1–15 has biased composition (polar residues); sequence MALETLTSPRLSSPM. The interval 1-42 is disordered; it reads MALETLTSPRLSSPMPTLFQDSALGFHGSKGKRSKRSRSEFD. The Nuclear localization signal signature appears at 30–38; that stretch reads KGKRSKRSR. 2 consecutive C2H2-type zinc fingers follow at residues 89-111 and 148-170; these read YKCS…KASH and HVCS…KRCH. Residues 175 to 202 form a disordered region; it reads NGGGVSSSVSNSEDVGSTSHVSSGHRGF. Residues 180–193 are compositionally biased toward low complexity; sequence SSSVSNSEDVGSTS.

Its subcellular location is the nucleus. Functionally, probable transcription factor that regulates root development and phosphate (Pi) acquisition and homeostasis. Probably acts as a repressor of primary root growth and regulates Pi homeostasis through the control of root architecture. This is Zinc finger protein ZAT6 (ZAT6) from Arabidopsis thaliana (Mouse-ear cress).